Consider the following 360-residue polypeptide: sn-glycerol-3-phosphate import ATP-binding protein UgpC (360 aa).

The 232-residue stretch at Leu4–Ile235 folds into the ABC transporter domain. Gly37–Ser44 is an ATP binding site.

Belongs to the ABC transporter superfamily. sn-glycerol-3-phosphate importer (TC 3.A.1.1.3) family. The complex is composed of two ATP-binding proteins (UgpC), two transmembrane proteins (UgpA and UgpE) and a solute-binding protein (UgpB).

Its subcellular location is the cell inner membrane. The enzyme catalyses sn-glycerol 3-phosphate(out) + ATP + H2O = sn-glycerol 3-phosphate(in) + ADP + phosphate + H(+). Functionally, part of the ABC transporter complex UgpBAEC involved in sn-glycerol-3-phosphate (G3P) import. Responsible for energy coupling to the transport system. The sequence is that of sn-glycerol-3-phosphate import ATP-binding protein UgpC from Burkholderia thailandensis (strain ATCC 700388 / DSM 13276 / CCUG 48851 / CIP 106301 / E264).